Consider the following 231-residue polypeptide: Transmembrane protein 225 (231 aa).

The Cytoplasmic segment spans residues 1–13 (MVHILVRKVEATN). Residues 14-34 (MFFSSWTLVFLAVGIIIEEWA) form a helical membrane-spanning segment. Residues 35–67 (ELKLGPQKPTITHSPWICCTPLWPSDGLEVIRN) are Extracellular-facing. The helical transmembrane segment at 68 to 88 (ILIVVLSLSFMHNLLLGFEFT) threads the bilayer. At 89 to 97 (YMIPQTKYT) the chain is on the cytoplasmic side. A helical transmembrane segment spans residues 98–118 (LIMTACLAFLTGILLLGALLL). Residues 119-135 (YHHMLRQGESVYYSSYK) lie on the Extracellular side of the membrane. A helical membrane pass occupies residues 136–156 (ISWIIFTAYLNVLFLFISGFL). Topologically, residues 157–231 (SLLQYKQPID…IQARRVTWAL (75 aa)) are cytoplasmic. The RVxF signature appears at 225–229 (RRVTW).

As to quaternary structure, interacts (via RVxF motif) with PPP1CC.

Its subcellular location is the cytoplasmic vesicle. It is found in the secretory vesicle. The protein resides in the acrosome membrane. Probably inhibits protein phosphatase 1 (PP1) in sperm via binding to catalytic subunit PPP1CC. The protein is Transmembrane protein 225 (TMEM225) of Bos taurus (Bovine).